Reading from the N-terminus, the 186-residue chain is MSQVYSVAVVVGSLRKESYNRKVARALSELAPSSLALKIVEIGDLPLYNEDVEAEAPPEAWKRFREEIRRSDAVLFVTPEHNRSVPGCLKNAIDVGSRPYGQSAWSGKPTAVVSVSPGAIGGFGANHAVRQSLVFLDMPCMQMPEAYIGGAASLFDDSGKLNDKTRPFLQAFVDKFASWVKLNRAV.

FMN is bound by residues 13-20, 80-83, and serine 116; these read SLRKESYN and EHNR.

Belongs to the SsuE family. In terms of assembly, homotetramer. Dimer of dimers. The tetrameric configuration has a central role in chromate reductase activity. It depends on FMN as a cofactor.

It carries out the reaction a quinone + NADH + H(+) = a quinol + NAD(+). The enzyme catalyses a quinone + NADPH + H(+) = a quinol + NADP(+). It catalyses the reaction Cr(6+) + 2 NADH + O2 = Cr(3+) + superoxide + 2 NAD(+) + 2 H(+). The catalysed reaction is Cr(6+) + 2 NADPH + O2 = Cr(3+) + superoxide + 2 NADP(+) + 2 H(+). Its activity is regulated as follows. Non-competitively inhibited by sulfate. Functionally, catalyzes the reduction of quinones. Acts by simultaneous two-electron transfer, avoiding formation of highly reactive semiquinone intermediates and producing quinols that promote tolerance of H(2)O(2). Quinone reduction is probably the primary biological role of ChrR. Can also reduce toxic chromate to insoluble and less toxic Cr(3+). Catalyzes the transfer of three electrons to Cr(6+) producing Cr(3+) and one electron to molecular oxygen. This reaction produces transiently a minimal amount of the toxic Cr(5+) species and reactive oxygen species (ROS). Chromate reduction protects the cell against chromate toxicity, but is likely a secondary activity. In Pseudomonas putida (Arthrobacter siderocapsulatus), this protein is Quinone reductase (chrR).